The primary structure comprises 453 residues: Bifunctional protein GlmU (453 aa).

The pyrophosphorylase stretch occupies residues 1–228; the sequence is MPHWAAVIMA…VHEALGINSR (228 aa). Residues lysine 23, glutamine 73, 78-79, 100-102, glycine 139, glutamate 153, asparagine 168, and asparagine 226 each bind UDP-N-acetyl-alpha-D-glucosamine; these read GT and SGD. Position 102 (aspartate 102) interacts with Mg(2+). A Mg(2+)-binding site is contributed by asparagine 226. Residues 229 to 249 are linker; that stretch reads AQLAAAEDVARQRILSYWMEE. The N-acetyltransferase stretch occupies residues 250–453; it reads GVTIIDPRST…IENWVRNKKK (204 aa). Positions 331 and 349 each coordinate UDP-N-acetyl-alpha-D-glucosamine. The active-site Proton acceptor is histidine 361. 2 residues coordinate UDP-N-acetyl-alpha-D-glucosamine: tyrosine 364 and asparagine 375. Acetyl-CoA-binding positions include alanine 378, 384–385, serine 403, alanine 421, and arginine 438; that span reads NY.

It in the N-terminal section; belongs to the N-acetylglucosamine-1-phosphate uridyltransferase family. The protein in the C-terminal section; belongs to the transferase hexapeptide repeat family. As to quaternary structure, homotrimer. It depends on Mg(2+) as a cofactor.

Its subcellular location is the cytoplasm. The enzyme catalyses alpha-D-glucosamine 1-phosphate + acetyl-CoA = N-acetyl-alpha-D-glucosamine 1-phosphate + CoA + H(+). It catalyses the reaction N-acetyl-alpha-D-glucosamine 1-phosphate + UTP + H(+) = UDP-N-acetyl-alpha-D-glucosamine + diphosphate. Its pathway is nucleotide-sugar biosynthesis; UDP-N-acetyl-alpha-D-glucosamine biosynthesis; N-acetyl-alpha-D-glucosamine 1-phosphate from alpha-D-glucosamine 6-phosphate (route II): step 2/2. It functions in the pathway nucleotide-sugar biosynthesis; UDP-N-acetyl-alpha-D-glucosamine biosynthesis; UDP-N-acetyl-alpha-D-glucosamine from N-acetyl-alpha-D-glucosamine 1-phosphate: step 1/1. It participates in bacterial outer membrane biogenesis; LPS lipid A biosynthesis. Its function is as follows. Catalyzes the last two sequential reactions in the de novo biosynthetic pathway for UDP-N-acetylglucosamine (UDP-GlcNAc). The C-terminal domain catalyzes the transfer of acetyl group from acetyl coenzyme A to glucosamine-1-phosphate (GlcN-1-P) to produce N-acetylglucosamine-1-phosphate (GlcNAc-1-P), which is converted into UDP-GlcNAc by the transfer of uridine 5-monophosphate (from uridine 5-triphosphate), a reaction catalyzed by the N-terminal domain. In Desulfitobacterium hafniense (strain DSM 10664 / DCB-2), this protein is Bifunctional protein GlmU.